We begin with the raw amino-acid sequence, 277 residues long: NH(3)-dependent NAD(+) synthetase (277 aa).

An ATP-binding site is contributed by Gly-46–Ser-53. Asp-52 lines the Mg(2+) pocket. Arg-142 contacts deamido-NAD(+). Thr-162 serves as a coordination point for ATP. Glu-167 serves as a coordination point for Mg(2+). Residues Lys-175 and Asp-182 each coordinate deamido-NAD(+). ATP is bound by residues Lys-191 and Thr-213. His-263–Lys-264 serves as a coordination point for deamido-NAD(+).

This sequence belongs to the NAD synthetase family. As to quaternary structure, homodimer.

The enzyme catalyses deamido-NAD(+) + NH4(+) + ATP = AMP + diphosphate + NAD(+) + H(+). Its pathway is cofactor biosynthesis; NAD(+) biosynthesis; NAD(+) from deamido-NAD(+) (ammonia route): step 1/1. In terms of biological role, catalyzes the ATP-dependent amidation of deamido-NAD to form NAD. Uses ammonia as a nitrogen source. The chain is NH(3)-dependent NAD(+) synthetase from Corynebacterium glutamicum (strain ATCC 13032 / DSM 20300 / JCM 1318 / BCRC 11384 / CCUG 27702 / LMG 3730 / NBRC 12168 / NCIMB 10025 / NRRL B-2784 / 534).